A 950-amino-acid chain; its full sequence is Leucine--tRNA ligase 2 (950 aa).

Positions P47–H57 match the 'HIGH' region motif. The 'KMSKS' region motif lies at K631–S635. K634 serves as a coordination point for ATP.

The protein belongs to the class-I aminoacyl-tRNA synthetase family.

It localises to the cytoplasm. It carries out the reaction tRNA(Leu) + L-leucine + ATP = L-leucyl-tRNA(Leu) + AMP + diphosphate. In Metallosphaera sedula (strain ATCC 51363 / DSM 5348 / JCM 9185 / NBRC 15509 / TH2), this protein is Leucine--tRNA ligase 2.